The sequence spans 206 residues: GTP-binding protein YPTC5 (206 aa).

A GTP-binding site is contributed by 15 to 22 (GDSGVGKT). Positions 37-45 (YKATIGADF) match the Effector region motif. GTP-binding positions include 63–67 (DTAGQ) and 125–128 (NKID). Residues C205 and C206 are each lipidated (S-geranylgeranyl cysteine).

It belongs to the small GTPase superfamily. Rab family.

The protein resides in the cell membrane. Its function is as follows. Protein transport. Probably involved in vesicular traffic. The polypeptide is GTP-binding protein YPTC5 (YPTC5) (Chlamydomonas reinhardtii (Chlamydomonas smithii)).